Consider the following 269-residue polypeptide: Formamidopyrimidine-DNA glycosylase (269 aa).

Residue P2 is the Schiff-base intermediate with DNA of the active site. The Proton donor role is filled by E3. Residue K57 is the Proton donor; for beta-elimination activity of the active site. DNA-binding residues include H90, R109, and K150. The segment at 235–269 (QVYGRKGEPCRVCGTPIVATKHAQRATFYCRQCQK) adopts an FPG-type zinc-finger fold. Catalysis depends on R259, which acts as the Proton donor; for delta-elimination activity.

Belongs to the FPG family. As to quaternary structure, monomer. It depends on Zn(2+) as a cofactor.

It catalyses the reaction Hydrolysis of DNA containing ring-opened 7-methylguanine residues, releasing 2,6-diamino-4-hydroxy-5-(N-methyl)formamidopyrimidine.. It carries out the reaction 2'-deoxyribonucleotide-(2'-deoxyribose 5'-phosphate)-2'-deoxyribonucleotide-DNA = a 3'-end 2'-deoxyribonucleotide-(2,3-dehydro-2,3-deoxyribose 5'-phosphate)-DNA + a 5'-end 5'-phospho-2'-deoxyribonucleoside-DNA + H(+). Involved in base excision repair of DNA damaged by oxidation or by mutagenic agents. Acts as a DNA glycosylase that recognizes and removes damaged bases. Has a preference for oxidized purines, such as 7,8-dihydro-8-oxoguanine (8-oxoG). Has AP (apurinic/apyrimidinic) lyase activity and introduces nicks in the DNA strand. Cleaves the DNA backbone by beta-delta elimination to generate a single-strand break at the site of the removed base with both 3'- and 5'-phosphates. The protein is Formamidopyrimidine-DNA glycosylase of Escherichia coli O157:H7.